A 239-amino-acid polypeptide reads, in one-letter code: Protein-S-isoprenylcysteine O-methyltransferase (239 aa).

Topologically, residues M1–V23 are cytoplasmic. The helical transmembrane segment at T24 to I44 threads the bilayer. Residues R45–K47 lie on the Lumenal side of the membrane. The chain crosses the membrane as a helical span at residues N48–A68. Topologically, residues K69–Y88 are cytoplasmic. A helical membrane pass occupies residues M89–L109. K110 is a topological domain (lumenal). A helical membrane pass occupies residues I111 to L131. Topologically, residues G132 to Y175 are cytoplasmic. S-adenosyl-L-methionine is bound by residues H159–V162, Y167, and H172–Y175. Positions L176 to F206 form an intramembrane region, helical. Over S207–I239 the chain is Cytoplasmic. Residue R209 coordinates substrate. E213 lines the S-adenosyl-L-methionine pocket.

Belongs to the class VI-like SAM-binding methyltransferase superfamily. Isoprenylcysteine carboxyl methyltransferase family.

The protein resides in the endoplasmic reticulum membrane. It catalyses the reaction [protein]-C-terminal S-[(2E,6E)-farnesyl]-L-cysteine + S-adenosyl-L-methionine = [protein]-C-terminal S-[(2E,6E)-farnesyl]-L-cysteine methyl ester + S-adenosyl-L-homocysteine. Functionally, mediates C-terminal methylation of the isoprenylated C-terminal cysteine in A-factor mating pheromone and Ras proteins. Does not have a preference for the farnesyl or geranylgeranyl moieties in the model substrates N-acetyl-S-farnesyl-L-cysteine (AFC) and N-acetyl-S-geranylgeranyl-L-cysteine (AGGC) in vitro. This chain is Protein-S-isoprenylcysteine O-methyltransferase (STE14), found in Saccharomyces cerevisiae (strain ATCC 204508 / S288c) (Baker's yeast).